A 503-amino-acid chain; its full sequence is uncharacterized protein (503 aa).

2 stretches are compositionally biased toward basic and acidic residues: residues 1-23 (MAHEGPRQVRDRGMTRSKAEKVR) and 203-215 (PLEKLGDQSRSDQ). Disordered regions lie at residues 1-29 (MAHEGPRQVRDRGMTRSKAEKVRPPTVPV) and 149-227 (ETFQ…SNSS). 2 positions are modified to phosphoserine: S239 and S243. Disordered regions lie at residues 346–370 (LDPARLPRPDMARSPSPKLWPGAKW) and 450–475 (LLSSSEPQRNDREGSASPPIHTGAPK). Basic and acidic residues predominate over residues 347-356 (DPARLPRPDM).

This is an uncharacterized protein from Bos taurus (Bovine).